The sequence spans 312 residues: L-lactate dehydrogenase (312 aa).

NAD(+) is bound by residues Val11, Asp32, Arg37, and 76–77; that span reads GA. Residues Gln79, Arg85, and 117–120 each bind substrate; that span reads NPVD. NAD(+) contacts are provided by residues 115-117 and Thr140; that span reads VSN. 145-148 provides a ligand contact to substrate; it reads DTAR. Residues Arg150 and His165 each contribute to the beta-D-fructose 1,6-bisphosphate site. Residue His172 is the Proton acceptor of the active site. At Tyr217 the chain carries Phosphotyrosine. Residue Thr226 coordinates substrate.

Belongs to the LDH/MDH superfamily. LDH family. As to quaternary structure, homotetramer.

The protein localises to the cytoplasm. It carries out the reaction (S)-lactate + NAD(+) = pyruvate + NADH + H(+). It functions in the pathway fermentation; pyruvate fermentation to lactate; (S)-lactate from pyruvate: step 1/1. Allosterically activated by fructose 1,6-bisphosphate (FBP). Its function is as follows. Catalyzes the conversion of lactate to pyruvate. This is L-lactate dehydrogenase from Pseudothermotoga lettingae (strain ATCC BAA-301 / DSM 14385 / NBRC 107922 / TMO) (Thermotoga lettingae).